The chain runs to 694 residues: Scarecrow-like protein 33 (694 aa).

Positions 289–313 (PAKASTFSKSPKGEKPEASGNSYTK) are disordered. Positions 309 to 692 (NSYTKETPDL…RIVYGSSIWV (384 aa)) constitute a GRAS domain. Positions 316-376 (PDLRTMLVSC…EARLAGIGTQ (61 aa)) are leucine repeat I (LRI). The segment at 395–462 (YQTYISVCPF…GSSCKLRITG (68 aa)) is VHIID. The VHIID motif lies at 428-432 (IHIID). The leucine repeat II (LRII) stretch occupies residues 478 to 510 (ETGRRLAKYCQKFNIPFEYNAIAQKWESIKLED). The PFYRE stretch occupies residues 519 to 613 (VAVNSLFRFR…KEFYGREIMN (95 aa)). The SAW stretch occupies residues 616–692 (ACEGTERVER…RIVYGSSIWV (77 aa)).

Belongs to the GRAS family. As to quaternary structure, interacts with SNRNP35.

Its subcellular location is the nucleus. In terms of biological role, probable transcription factor involved in plant development. This Arabidopsis thaliana (Mouse-ear cress) protein is Scarecrow-like protein 33 (SCL33).